Reading from the N-terminus, the 304-residue chain is Coenzyme PQQ synthesis protein B (304 aa).

The protein belongs to the PqqB family.

It participates in cofactor biosynthesis; pyrroloquinoline quinone biosynthesis. May be involved in the transport of PQQ or its precursor to the periplasm. The chain is Coenzyme PQQ synthesis protein B from Pseudomonas paraeruginosa (strain DSM 24068 / PA7) (Pseudomonas aeruginosa (strain PA7)).